The chain runs to 304 residues: Nucleotide-binding protein ROP_69550 (304 aa).

24–31 (GLSGAGLQ) is an ATP binding site. GTP is bound at residue 75–78 (DVRS).

It belongs to the RapZ-like family.

Displays ATPase and GTPase activities. The chain is Nucleotide-binding protein ROP_69550 from Rhodococcus opacus (strain B4).